Reading from the N-terminus, the 824-residue chain is Type IV secretion system protein PtlC homolog (824 aa).

Position 456–463 (456–463) interacts with ATP; the sequence is GQSGSGKT.

The protein belongs to the TrbE/VirB4 family.

It localises to the cell membrane. This chain is Type IV secretion system protein PtlC homolog (ptlC), found in Bordetella bronchiseptica (strain ATCC BAA-588 / NCTC 13252 / RB50) (Alcaligenes bronchisepticus).